The sequence spans 425 residues: uncharacterized protein (425 aa).

This is an uncharacterized protein from Acidianus sp. F28 (AFV-2).